The sequence spans 116 residues: Phycoerythrin alpha-3 subunit (116 aa).

(2R,3E)-phycoerythrobilin contacts are provided by Ser53, Glu63, Arg64, Cys67, and Lys85.

This sequence belongs to the phycoerythrin family. In terms of assembly, heterotetramer of 2 different alpha chains and 2 identical beta chains which form 2 alpha-beta heterodimers within the heterotetramer. The two alpha-beta heterodimers are rotated to an open configuration in contrast to the closed configuration found in other cryptophyte species due to the insertion of a single amino acid, Asp-65, in a conserved region of the alpha chain. In the open form, the central chromophores are not in physical contact but are separated by a water-filled channel. Post-translationally, contains three phycoerythrobilin chromophores with binding mediated by both the alpha and beta subunits.

The protein resides in the plastid. The protein localises to the chloroplast thylakoid membrane. In terms of biological role, light-harvesting photosynthetic tetrapyrrole chromophore-protein from the phycobiliprotein complex. The chain is Phycoerythrin alpha-3 subunit from Hemiselmis andersenii (Cryptophyte alga).